The following is a 278-amino-acid chain: Deoxyuridine 5'-triphosphate nucleotidohydrolase (278 aa).

Residues 171-173 (RSG) and 273-274 (FG) each bind substrate.

This sequence belongs to the dUTPase family. Mg(2+) serves as cofactor.

It carries out the reaction dUTP + H2O = dUMP + diphosphate + H(+). Involved in nucleotide metabolism: produces dUMP, the immediate precursor of thymidine nucleotides and decreases the intracellular concentration of dUTP to avoid uracil incorporation into viral DNA. This is Deoxyuridine 5'-triphosphate nucleotidohydrolase from Homo sapiens (Human).